A 208-amino-acid chain; its full sequence is Dephospho-CoA kinase (208 aa).

Residues 8 to 208 (LVGVTGGIGS…VYQSLLTVVE (201 aa)) form the DPCK domain. Residue 16 to 21 (GSGKST) participates in ATP binding.

It belongs to the CoaE family.

The protein localises to the cytoplasm. It carries out the reaction 3'-dephospho-CoA + ATP = ADP + CoA + H(+). The protein operates within cofactor biosynthesis; coenzyme A biosynthesis; CoA from (R)-pantothenate: step 5/5. In terms of biological role, catalyzes the phosphorylation of the 3'-hydroxyl group of dephosphocoenzyme A to form coenzyme A. The chain is Dephospho-CoA kinase from Chlorobaculum tepidum (strain ATCC 49652 / DSM 12025 / NBRC 103806 / TLS) (Chlorobium tepidum).